Consider the following 292-residue polypeptide: Elongation factor Ts (292 aa).

Residues 80–83 form an involved in Mg(2+) ion dislocation from EF-Tu region; the sequence is TDFV.

This sequence belongs to the EF-Ts family.

It localises to the cytoplasm. In terms of biological role, associates with the EF-Tu.GDP complex and induces the exchange of GDP to GTP. It remains bound to the aminoacyl-tRNA.EF-Tu.GTP complex up to the GTP hydrolysis stage on the ribosome. The chain is Elongation factor Ts from Ralstonia nicotianae (strain ATCC BAA-1114 / GMI1000) (Ralstonia solanacearum).